The following is a 398-amino-acid chain: UDP-N-acetylglucosamine--N-acetylmuramyl-(pentapeptide) pyrophosphoryl-undecaprenol N-acetylglucosamine transferase (398 aa).

UDP-N-acetyl-alpha-D-glucosamine-binding positions include 11–13 (TGG), N124, R164, S192, and Q318.

It belongs to the glycosyltransferase 28 family. MurG subfamily.

It is found in the cell membrane. It catalyses the reaction di-trans,octa-cis-undecaprenyl diphospho-N-acetyl-alpha-D-muramoyl-L-alanyl-D-glutamyl-meso-2,6-diaminopimeloyl-D-alanyl-D-alanine + UDP-N-acetyl-alpha-D-glucosamine = di-trans,octa-cis-undecaprenyl diphospho-[N-acetyl-alpha-D-glucosaminyl-(1-&gt;4)]-N-acetyl-alpha-D-muramoyl-L-alanyl-D-glutamyl-meso-2,6-diaminopimeloyl-D-alanyl-D-alanine + UDP + H(+). It functions in the pathway cell wall biogenesis; peptidoglycan biosynthesis. In terms of biological role, cell wall formation. Catalyzes the transfer of a GlcNAc subunit on undecaprenyl-pyrophosphoryl-MurNAc-pentapeptide (lipid intermediate I) to form undecaprenyl-pyrophosphoryl-MurNAc-(pentapeptide)GlcNAc (lipid intermediate II). The polypeptide is UDP-N-acetylglucosamine--N-acetylmuramyl-(pentapeptide) pyrophosphoryl-undecaprenol N-acetylglucosamine transferase (Deinococcus radiodurans (strain ATCC 13939 / DSM 20539 / JCM 16871 / CCUG 27074 / LMG 4051 / NBRC 15346 / NCIMB 9279 / VKM B-1422 / R1)).